The chain runs to 1515 residues: Lysophospholipase nte1 (1515 aa).

At 1–59 (MESLSNLGNAMSSVLSETTSTTATAILADPTEALSSVVALASDAVSKATSDVVPEHTPT) the chain is on the cytoplasmic side. A helical membrane pass occupies residues 60-80 (SWFTIILWLLHRISSVLYFVI). Residues 81–102 (KLTTITTPTFLFNIFSTSLTVT) are Lumenal-facing. The helical transmembrane segment at 103 to 123 (MNATTLVLIMLFMMAGVTWVV) threads the bilayer. Residues 124 to 1515 (RYRYLNMYSR…RTMAPRRASI (1392 aa)) lie on the Cytoplasmic side of the membrane. Disordered regions lie at residues 278 to 303 (MHDT…GYPM), 519 to 580 (VTAT…TPRN), and 617 to 639 (VNPD…SRGG). Polar residues-rich tracts occupy residues 543–554 (LTNTQQLKSGPA) and 566–579 (PRPQ…STPR). Residues 670 to 789 (SPVP…LAGY) and 835 to 955 (RLTE…IAAR) each bind a nucleoside 3',5'-cyclic phosphate. A PNPLA domain is found at 1212-1376 (LVLGGGGARG…IDNLTVSRMK (165 aa)). A GXGXXG motif is present at residues 1216 to 1221 (GGGARG). Residues 1243–1247 (GTSIG) carry the GXSXG motif. Ser-1245 serves as the catalytic Nucleophile. The Proton acceptor role is filled by Asp-1363. A DGA/G motif is present at residues 1363 to 1365 (DGG).

It belongs to the NTE family.

Its subcellular location is the endoplasmic reticulum membrane. The enzyme catalyses a 1-acyl-sn-glycero-3-phosphocholine + H2O = sn-glycerol 3-phosphocholine + a fatty acid + H(+). Inhibited by organophosphorus esters. Functionally, intracellular phospholipase B that catalyzes the double deacylation of phosphatidylcholine (PC) to glycerophosphocholine (GroPCho). Plays an important role in membrane lipid homeostasis. Responsible for the rapid PC turnover in response to inositol, elevated temperatures, or when choline is present in the growth medium. The sequence is that of Lysophospholipase nte1 (nte1) from Neurospora crassa (strain ATCC 24698 / 74-OR23-1A / CBS 708.71 / DSM 1257 / FGSC 987).